A 426-amino-acid polypeptide reads, in one-letter code: LIM/homeobox protein Lhx2 (426 aa).

The span at 14–24 (VIDEMDRRQER) shows a compositional bias: basic and acidic residues. A disordered region spans residues 14 to 42 (VIDEMDRRQERGSGISSAIDRGDTETTMP). 2 consecutive LIM zinc-binding domains span residues 52-104 (CAGC…CKED) and 114-167 (CARC…CRLH). Residues 248 to 268 (DAEHLDRDQPYPSSQKTKRMR) form a disordered region. The homeobox DNA-binding region spans 264–323 (TKRMRTSFKHHQLRTMKSYFAINHNPDAKDLKQLAQKTGLTKRVLQVWFQNARAKFRRNL). The Nuclear localization signal motif lies at 305 to 321 (KRVLQVWFQNARAKFRR). Residues 326–354 (QENTGVDKTSDATLQTGTPSGPASELSNA) are compositionally biased toward polar residues. Residues 326-370 (QENTGVDKTSDATLQTGTPSGPASELSNASLSPSSTPTTLTDLTS) are disordered. Residues 355-370 (SLSPSSTPTTLTDLTS) are compositionally biased toward low complexity.

Interacts (via LIM domains) with CITED2. Interacts with POU4F2. As to expression, found in discrete regions of the developing CNS, primarily in diencephalic and telencephalic structures and a subset of lymphoid tissues. Also found in embryonic spinal cord and fetal liver.

The protein resides in the nucleus. Functionally, acts as a transcriptional activator. Stimulates the promoter of the alpha-glycoprotein gene. Transcriptional regulatory protein involved in the control of cell differentiation in developing lymphoid and neural cell types. This chain is LIM/homeobox protein Lhx2 (Lhx2), found in Rattus norvegicus (Rat).